The primary structure comprises 106 residues: Iron-sulfur cluster assembly protein CyaY (106 aa).

It belongs to the frataxin family.

In terms of biological role, involved in iron-sulfur (Fe-S) cluster assembly. May act as a regulator of Fe-S biogenesis. The protein is Iron-sulfur cluster assembly protein CyaY of Salmonella agona (strain SL483).